A 485-amino-acid polypeptide reads, in one-letter code: Trk system potassium uptake protein TrkH (485 aa).

At 1 to 2 (MQ) the chain is on the cytoplasmic side. Residues 3–29 (FRSIIRIVGLLLALFSVTMLAPALVAL) traverse the membrane as a helical segment. Over 30–35 (LYRDGA) the chain is Periplasmic. A helical membrane pass occupies residues 36 to 57 (GVPFVTTFFVLLFCGAMCWFPN). The Cytoplasmic segment spans residues 58–65 (RRHKHELK). Residues 66–90 (SRDGFLIVVLFWTVLGSAGSLPFLI) form a helical membrane-spanning segment. Residues 98-109 (VTDAFFESFSAL) constitute an intramembrane region (helical; Pore-forming). Residues 110–115 (TTTGAT) lie within the membrane without spanning it. The segment at 110-115 (TTTGAT) is selectivity filter part 1. Positions 111 and 112 each coordinate K(+). At 116 to 124 (VIVGLDELP) the chain is on the periplasmic side. Residues 125–150 (KAILFYRQFLQWFGGMGIIVLAVAIL) form a helical membrane-spanning segment. The Cytoplasmic segment spans residues 151–177 (PVLGIGGMQLYRAEIPGPVKDTKMTPR). The chain crosses the membrane as a helical span at residues 178–202 (IAETAKALWYIYLSLTIACAVAFWL). Residues 203-205 (AGM) lie on the Periplasmic side of the membrane. Residue Thr-206 is an intramembrane region. The segment at residues 207-218 (PFDAISHSFSTI) is an intramembrane region (helical; Pore-forming). The stretch at 219-224 (AIGGFS) is an intramembrane region. The tract at residues 219 to 224 (AIGGFS) is selectivity filter part 2. K(+) is bound by residues Ile-220 and Gly-221. Over 225–234 (THDASMGYFD) the chain is Periplasmic. The helical intramembrane region spans 235 to 250 (SYAINLITVVFLLISA). Residues 276 to 296 (FRAFIFIQVLLFLVCFLLLLK) form a helical membrane-spanning segment. The segment at residues 303-318 (PYDAFDQALFQTVSIS) is an intramembrane region (helical; Pore-forming). The stretch at 319–324 (TTAGFT) is an intramembrane region. Residues 319 to 324 (TTAGFT) form a selectivity filter part 3 region. K(+)-binding residues include Thr-320 and Ala-321. At 325–332 (TTGFADWP) the chain is on the periplasmic side. An intramembrane region (helical) is located at residues 333 to 344 (LFLPVLLLFSSF). An intramembrane region (note=Loop between two helices) is located at residues 345 to 357 (IGGCAGSTGGGMK). The helical transmembrane segment at 392–419 (PQRVVDAVWGFFSAYALVFVVCMLGLIA) threads the bilayer. Residues 420–421 (TG) are Periplasmic-facing. An intramembrane segment occupies 422–423 (MD). The helical; Pore-forming intramembrane region spans 424-434 (ELSAFSAVAAT). The stretch at 435–441 (LNNLGPG) is an intramembrane region. Residues 436–441 (NNLGPG) are selectivity filter part 4. Residues Asn-437 and Leu-438 each coordinate K(+). Residues 442–453 (LGEVALHFGDVN) lie on the Periplasmic side of the membrane. The helical intramembrane region spans 454 to 465 (DKAKWVLIVSML).

The protein belongs to the TrkH potassium transport family. As to quaternary structure, homodimer.

Its subcellular location is the cell inner membrane. Low-affinity potassium transport system. Interacts with trk system potassium uptake protein TrkA and requires TrkE for transport activity. Selective for permeation of potassium ion and rubidium ion over smaller ions such as natrium or litium. The chain is Trk system potassium uptake protein TrkH from Vibrio parahaemolyticus serotype O3:K6 (strain RIMD 2210633).